The following is a 1132-amino-acid chain: Myosin-binding protein C, fast-type (1132 aa).

Residues 1 to 59 form a disordered region; it reads MPEPSKAAPKKEAKKKEEKKEEKKEAPPPQEHKDEAPDDVHPPETPDPEGLFLSKPQNV. Residues 9-44 show a composition bias toward basic and acidic residues; the sequence is PKKEAKKKEEKKEEKKEAPPPQEHKDEAPDDVHPPE. 5 Ig-like C2-type domains span residues 48–149, 249–338, 339–429, 430–530, and 531–630; these read PEGL…SIDV, SEAF…VKEP, PVTV…VEEK, QLEV…KQEP, and PKIH…VVDV. 2 consecutive Fibronectin type-III domains span residues 633–729 and 731–826; these read PPQS…IAPT and EPTH…IREI. Positions 830 to 923 constitute an Ig-like C2-type 6 domain; that stretch reads PKIRLPRHLR…ATLRLRVVER (94 aa). The Fibronectin type-III 3 domain maps to 926-1022; that stretch reads PPQAVRVMEV…HNTARIAKEG (97 aa). One can recognise an Ig-like C2-type 7 domain in the interval 1039–1132; the sequence is PQFLTPLVDR…ECRLDVRVPQ (94 aa).

This sequence belongs to the immunoglobulin superfamily. MyBP family.

Thick filament-associated protein located in the crossbridge region of vertebrate striated muscle a bands. In vitro it binds MHC, F-actin and native thin filaments, and modifies the activity of actin-activated myosin ATPase. It may modulate muscle contraction or may play a more structural role. The polypeptide is Myosin-binding protein C, fast-type (MYBPC2) (Gallus gallus (Chicken)).